Reading from the N-terminus, the 88-residue chain is Long neurotoxin LNTX-2 (88 aa).

Positions 1–21 are cleaved as a signal peptide; it reads MKTLLLTLVVVTIVCLDFGYA. 4 disulfides stabilise this stretch: Cys-24/Cys-42, Cys-35/Cys-63, Cys-67/Cys-78, and Cys-79/Cys-84.

This sequence belongs to the three-finger toxin family. Long-chain subfamily. Type II alpha-neurotoxin sub-subfamily. As to expression, expressed by the venom gland.

It localises to the secreted. Functionally, binds with high affinity to muscular nicotinic acetylcholine receptors (nAChRs), whereas it binds with a low affinity to neuronal alpha-7/CHRNA7 nAChRs. The sequence is that of Long neurotoxin LNTX-2 from Demansia vestigiata (Lesser black whip snake).